A 415-amino-acid polypeptide reads, in one-letter code: MEEIGIILPEKDDQVTDAKGLPFAGPQTFDELESEDLYTKYKKLQRMLEFLEVQEEYIKDEQRNLKKEYLHAQEEVKRIQSVPLVIGQFLEAVDQNTGIVGSTTGSNYYVRILSTIDRELLKPSASVALHKHSNALVDVLPPEADSSISMLQADEKPDVQYSDIGGMDTQKQEIREAVELPLTHVELYRQIGIEPPRGVLMYGPPGCGKTMLANAVAHHTTAAFIRVVGSEFVQKYLGEGPRMVRDVFRLAKENSPAIIFIDEIDAIATKRFDAQTGADREVQRILLELLNQMDGFDQTTNVKVIMATNRADTLDPALLRPGRLDRKIEFPLPDRRQKRLIFSTITAKMNLSEEVDLEEFVARPDRVSGADINAICQEAGMNAVRENRYIVLPKDFEKGYKNNIKKDESEYEFYK.

Position 203–210 (203–210 (GPPGCGKT)) interacts with ATP.

The protein belongs to the AAA ATPase family.

It is found in the cytoplasm. It localises to the nucleus. Functionally, the 26S proteasome is involved in the ATP-dependent degradation of ubiquitinated proteins. The regulatory (or ATPase) complex confers ATP dependency and substrate specificity to the 26S complex. The protein is 26S proteasome regulatory subunit 6B of Manduca sexta (Tobacco hawkmoth).